The following is a 211-amino-acid chain: Proteasome subunit beta (211 aa).

The propeptide at 1–9 (MSEAETLKG) is removed in mature form; by autocatalysis. Catalysis depends on Thr10, which acts as the Nucleophile.

Belongs to the peptidase T1B family. In terms of assembly, the 20S proteasome core is composed of 14 alpha and 14 beta subunits that assemble into four stacked heptameric rings, resulting in a barrel-shaped structure. The two inner rings, each composed of seven catalytic beta subunits, are sandwiched by two outer rings, each composed of seven alpha subunits. The catalytic chamber with the active sites is on the inside of the barrel. Has a gated structure, the ends of the cylinder being occluded by the N-termini of the alpha-subunits. Is capped at one or both ends by the proteasome regulatory ATPase, PAN.

The protein localises to the cytoplasm. It carries out the reaction Cleavage of peptide bonds with very broad specificity.. The formation of the proteasomal ATPase PAN-20S proteasome complex, via the docking of the C-termini of PAN into the intersubunit pockets in the alpha-rings, triggers opening of the gate for substrate entry. Interconversion between the open-gate and close-gate conformations leads to a dynamic regulation of the 20S proteasome proteolysis activity. Component of the proteasome core, a large protease complex with broad specificity involved in protein degradation. This is Proteasome subunit beta from Methanosphaerula palustris (strain ATCC BAA-1556 / DSM 19958 / E1-9c).